Consider the following 171-residue polypeptide: Large ribosomal subunit protein uL10 (171 aa).

Belongs to the universal ribosomal protein uL10 family. In terms of assembly, part of the ribosomal stalk of the 50S ribosomal subunit. The N-terminus interacts with L11 and the large rRNA to form the base of the stalk. The C-terminus forms an elongated spine to which L12 dimers bind in a sequential fashion forming a multimeric L10(L12)X complex.

Functionally, forms part of the ribosomal stalk, playing a central role in the interaction of the ribosome with GTP-bound translation factors. The sequence is that of Large ribosomal subunit protein uL10 (rplJ) from Lactococcus lactis subsp. lactis (strain IL1403) (Streptococcus lactis).